The primary structure comprises 336 residues: HTH-type transcriptional repressor PurR (336 aa).

The HTH lacI-type domain occupies 2–56 (ATIKDVAKLAGVSTTTVSHVINKTRFVAEDTSKAVWDAIQQLNYSPSAVARSLKV). The H-T-H motif DNA-binding region spans 4 to 23 (IKDVAKLAGVSTTTVSHVIN). Residues 48-56 (SAVARSLKV) mediate DNA binding. The hypoxanthine site is built by Tyr-73, Lys-188, Phe-219, and Asp-273.

In terms of assembly, homodimer.

The protein operates within purine metabolism; purine nucleotide biosynthesis [regulation]. In terms of biological role, is the main repressor of the genes involved in the de novo synthesis of purine nucleotides, regulating purB, purC, purEK, purF, purHD, purL, purMN and guaBA expression. PurR is allosterically activated to bind its cognate DNA by binding the purine corepressors, hypoxanthine or guanine, thereby effecting transcription repression. In Actinobacillus pleuropneumoniae serotype 3 (strain JL03), this protein is HTH-type transcriptional repressor PurR.